Here is a 373-residue protein sequence, read N- to C-terminus: Queuine tRNA-ribosyltransferase (373 aa).

Asp-89 acts as the Proton acceptor in catalysis. Substrate-binding positions include 89–93 (DSGGF), Asp-143, Gln-192, and Gly-220. The segment at 251–257 (GVGTPED) is RNA binding. Asp-270 functions as the Nucleophile in the catalytic mechanism. Residues 275 to 279 (TRNAR) form an RNA binding; important for wobble base 34 recognition region. The Zn(2+) site is built by Cys-308, Cys-310, Cys-313, and His-339.

It belongs to the queuine tRNA-ribosyltransferase family. As to quaternary structure, homodimer. Within each dimer, one monomer is responsible for RNA recognition and catalysis, while the other monomer binds to the replacement base PreQ1. The cofactor is Zn(2+).

It catalyses the reaction 7-aminomethyl-7-carbaguanine + guanosine(34) in tRNA = 7-aminomethyl-7-carbaguanosine(34) in tRNA + guanine. It functions in the pathway tRNA modification; tRNA-queuosine biosynthesis. Catalyzes the base-exchange of a guanine (G) residue with the queuine precursor 7-aminomethyl-7-deazaguanine (PreQ1) at position 34 (anticodon wobble position) in tRNAs with GU(N) anticodons (tRNA-Asp, -Asn, -His and -Tyr). Catalysis occurs through a double-displacement mechanism. The nucleophile active site attacks the C1' of nucleotide 34 to detach the guanine base from the RNA, forming a covalent enzyme-RNA intermediate. The proton acceptor active site deprotonates the incoming PreQ1, allowing a nucleophilic attack on the C1' of the ribose to form the product. After dissociation, two additional enzymatic reactions on the tRNA convert PreQ1 to queuine (Q), resulting in the hypermodified nucleoside queuosine (7-(((4,5-cis-dihydroxy-2-cyclopenten-1-yl)amino)methyl)-7-deazaguanosine). The polypeptide is Queuine tRNA-ribosyltransferase (Aliarcobacter butzleri (strain RM4018) (Arcobacter butzleri)).